Reading from the N-terminus, the 631-residue chain is Myotonin-protein kinase (631 aa).

The Cytoplasmic segment spans residues 1–592; that stretch reads MSAEVRLRQL…PRPGLSEARC (592 aa). The 269-residue stretch at 71-339 folds into the Protein kinase domain; it reads FEILKVIGRG…AGDFQKHPFF (269 aa). ATP is bound by residues 77–85 and K100; that span reads IGRGAFSEV. Catalysis depends on D195, which acts as the Proton acceptor. A phosphoserine; by autocatalysis mark is found at S216 and S228. Position 234 is a phosphothreonine; by autocatalysis (T234). The AGC-kinase C-terminal domain occupies 340-415; sequence FGLDWEGLRD…CCMAFRDNQV (76 aa). Residues 464-532 adopt a coiled-coil conformation; that stretch reads AETTVTLQQL…QERMEMLQAP (69 aa). Residues 593 to 613 form a helical; Anchor for type IV membrane protein membrane-spanning segment; sequence LLLFAAALAAAATLGCTGLVA. At 614–631 the chain is on the lumenal side; the sequence is YTGGLTPVWCFPGATFAP.

Belongs to the protein kinase superfamily. AGC Ser/Thr protein kinase family. DMPK subfamily. Homodimer; homodimerization stimulates the kinase activity. Interacts with HSPB2; may enhance DMPK kinase activity. Interacts with PLN; phosphorylates PLN. May interact with RAC1; may regulate DMPK kinase activity. Interacts with LMNA; may regulate nuclear envelope stability. Requires Mg(2+) as cofactor. In terms of processing, phosphorylated. Autophosphorylates. Phosphorylation by RAF1 may result in activation of DMPK. Proteolytic processing of the C-terminus may remove the transmembrane domain and release the kinase from membranes stimulating its activity. In terms of tissue distribution, expressed in all tissues tested, with a predominance in brain, skeletal muscle, heart, and other tissues containing smooth muscle. In the heart, expression is restricted to the cardiomyocytes in the ventricle and atrium.

It localises to the sarcoplasmic reticulum membrane. Its subcellular location is the cell membrane. The protein resides in the endoplasmic reticulum membrane. It is found in the nucleus outer membrane. The protein localises to the mitochondrion outer membrane. It localises to the cytoplasm. Its subcellular location is the cytosol. The enzyme catalyses L-seryl-[protein] + ATP = O-phospho-L-seryl-[protein] + ADP + H(+). It catalyses the reaction L-threonyl-[protein] + ATP = O-phospho-L-threonyl-[protein] + ADP + H(+). Its activity is regulated as follows. Coiled-coil-mediated oligomerization enhances the catalytic activity. Proteolytic processing of the C-terminus may release the protein from membranes and constitute a mean to regulate the enzyme. May be regulated by HSPB2, RAC1, RAF1 and G-protein second messengers. Its function is as follows. Non-receptor serine/threonine protein kinase which is necessary for the maintenance of skeletal muscle structure and function. May play a role in myocyte differentiation and survival by regulating the integrity of the nuclear envelope and the expression of muscle-specific genes. May also phosphorylate PPP1R12A and inhibit the myosin phosphatase activity to regulate myosin phosphorylation. Also critical to the modulation of cardiac contractility and to the maintenance of proper cardiac conduction activity probably through the regulation of cellular calcium homeostasis. Phosphorylates PLN, a regulator of calcium pumps and may regulate sarcoplasmic reticulum calcium uptake in myocytes. May also phosphorylate FXYD1/PLM which is able to induce chloride currents. May also play a role in synaptic plasticity. The polypeptide is Myotonin-protein kinase (Dmpk) (Mus musculus (Mouse)).